Here is a 132-residue protein sequence, read N- to C-terminus: Interleukin-13 (132 aa).

Residues 1 to 18 (MALLLTMVIALTCLGGFA) form the signal peptide. Residues Asn-38, Asn-49, Asn-57, and Asn-72 are each glycosylated (N-linked (GlcNAc...) asparagine). 2 cysteine pairs are disulfide-bonded: Cys-48–Cys-76 and Cys-64–Cys-90.

Belongs to the IL-4/IL-13 family. As to quaternary structure, interacts with IL13RA2.

The protein resides in the secreted. Functionally, cytokine that plays important roles in allergic inflammation and immune response to parasite infection. Synergizes with IL2 in regulating interferon-gamma synthesis. Stimulates B-cell proliferation, and activation of eosinophils, basophils, and mast cells. Plays an important role in controlling IL33 activity by modulating the production of transmembrane and soluble forms of interleukin-1 receptor-like 1/IL1RL1. Displays the capacity to antagonize Th1-driven proinflammatory immune response and downregulates synthesis of many proinflammatory cytokines including IL1, IL6, IL10, IL12 and TNF-alpha through a mechanism that partially involves suppression of NF-kappa-B. Also functions on nonhematopoietic cells, including endothelial cells where it induces vascular cell adhesion protein 1/VCAM1, which is important in the recruitment of eosinophils. Exerts its biological effects through its receptors which comprises the IL4R chain and the IL13RA1 chain, to activate JAK1 and TYK2, leading to the activation of STAT6. Aside from IL13RA1, another receptor IL13RA2 acts as a high affinity decoy for IL13 and mediates internalization and depletion of extracellular IL13. The chain is Interleukin-13 (IL13) from Macaca thibetana (Pere David's macaque).